The chain runs to 720 residues: Serrate RNA effector molecule (720 aa).

Disordered regions lie at residues methionine 1 to arginine 192, leucine 288 to aspartate 335, and glutamate 361 to glycine 380. The span at serine 33–proline 47 shows a compositional bias: low complexity. Positions leucine 48 to serine 76 are enriched in basic and acidic residues. Phosphoserine is present on residues serine 76, serine 90, and serine 92. The span at aspartate 99–tyrosine 115 shows a compositional bias: basic residues. Composition is skewed to basic and acidic residues over residues arginine 116–arginine 126 and proline 136–histidine 164. The segment covering leucine 288–proline 297 has biased composition (polar residues). Positions glutamate 368 to histidine 378 are enriched in basic and acidic residues. The C2H2-type zinc-finger motif lies at tyrosine 498–histidine 523. Disordered stretches follow at residues tyrosine 543 to glycine 622 and arginine 666 to leucine 687. Residues proline 570 to asparagine 607 are compositionally biased toward basic and acidic residues. Residues aspartate 608–glycine 622 show a composition bias toward gly residues. Serine 689 bears the Phosphoserine mark.

It belongs to the ARS2 family. As to quaternary structure, interacts with HYL1. Interacts with RCF3, RS40 and RS41. As to expression, expressed in shoot meristems and in emerging organ primordia throughout development.

Its subcellular location is the nucleus. The protein localises to the nucleus speckle. Functionally, acts as a mediator between the cap-binding complex (CBC) and both the pre-mRNA splicing and primary microRNAs (miRNAs) processing machinery. Required for proper processing of primary miRNAs to miRNAs, thereby playing a role in RNA-mediated gene silencing (RNAi) by miRNAs. Does not participate in sense post-transcriptional gene silencing. Acts as a regulator of meristem activity and adaxial leaf fate via the miRNA gene-silencing pathway by regulating the expression of PHB and by limiting the competence of shoot tissue to respond to KNOX expression. Its function is however not limited to miRNA-mediated repression of leaf polarity genes, but rather acts as a general regulator of primary microRNAs processing. Also critical for the accumulation of the trans-acting small interfering RNA (ta-siRNA). Required for pre-mRNA splicing. In Arabidopsis thaliana (Mouse-ear cress), this protein is Serrate RNA effector molecule (SE).